The sequence spans 331 residues: Glycerol-3-phosphate dehydrogenase [NAD(P)+] (331 aa).

3 residues coordinate NADPH: Ser10, Trp11, and Lys101. Residues Lys101, Gly132, and Ser134 each coordinate sn-glycerol 3-phosphate. Residue Ala136 coordinates NADPH. Positions 188, 241, 251, 252, and 253 each coordinate sn-glycerol 3-phosphate. Lys188 acts as the Proton acceptor in catalysis. Residue Arg252 coordinates NADPH. The NADPH site is built by Val276 and Glu278.

Belongs to the NAD-dependent glycerol-3-phosphate dehydrogenase family.

It localises to the cytoplasm. The enzyme catalyses sn-glycerol 3-phosphate + NAD(+) = dihydroxyacetone phosphate + NADH + H(+). The catalysed reaction is sn-glycerol 3-phosphate + NADP(+) = dihydroxyacetone phosphate + NADPH + H(+). Its pathway is membrane lipid metabolism; glycerophospholipid metabolism. In terms of biological role, catalyzes the reduction of the glycolytic intermediate dihydroxyacetone phosphate (DHAP) to sn-glycerol 3-phosphate (G3P), the key precursor for phospholipid synthesis. In Acholeplasma laidlawii (strain PG-8A), this protein is Glycerol-3-phosphate dehydrogenase [NAD(P)+].